The primary structure comprises 112 residues: Probable 4-amino-4-deoxy-L-arabinose-phosphoundecaprenol flippase subunit ArnE (112 aa).

In terms of domain architecture, EamA spans 35 to 110 (RHILFWLGMA…IVVGIVILGT (76 aa)). The next 3 helical transmembrane spans lie at 37–57 (ILFWLGMALLCLGCGMLLWLS), 66–86 (IAYPMLSLNFVWVTLAGWGIW), and 89–109 (PVARRHWLGVGLIVVGIVILG).

Belongs to the ArnE family. In terms of assembly, heterodimer of ArnE and ArnF.

The protein resides in the cell inner membrane. Its pathway is bacterial outer membrane biogenesis; lipopolysaccharide biosynthesis. Its function is as follows. Translocates 4-amino-4-deoxy-L-arabinose-phosphoundecaprenol (alpha-L-Ara4N-phosphoundecaprenol) from the cytoplasmic to the periplasmic side of the inner membrane. In Klebsiella pneumoniae (strain 342), this protein is Probable 4-amino-4-deoxy-L-arabinose-phosphoundecaprenol flippase subunit ArnE.